The primary structure comprises 457 residues: Argininosuccinate lyase (457 aa).

This sequence belongs to the lyase 1 family. Argininosuccinate lyase subfamily.

The protein localises to the cytoplasm. It catalyses the reaction 2-(N(omega)-L-arginino)succinate = fumarate + L-arginine. The protein operates within amino-acid biosynthesis; L-arginine biosynthesis; L-arginine from L-ornithine and carbamoyl phosphate: step 3/3. The sequence is that of Argininosuccinate lyase from Escherichia fergusonii (strain ATCC 35469 / DSM 13698 / CCUG 18766 / IAM 14443 / JCM 21226 / LMG 7866 / NBRC 102419 / NCTC 12128 / CDC 0568-73).